The sequence spans 290 residues: MKRTPHLLAIQSHVVFGHAGNSAAVFPMQRVGVNVWPLNTVQFSNHTQYGQWAGEVLAPQQIPALVEGIAAIGELGNCDAILSGYLGSADQGRAILTGVARIKAINPKALYLCDPVMGHPEKGCIVPQEVSDFLLDEAAAMADFLCPNQLELDSFAGRKPQSLFDCLAMAKALLARGPKAVLVKHLDYPGKLPDGFEILLVTAEGSWHLRRPLLAFARQPVGVGDLTSGLFLARVLLGDSLLAAFEFTAAAVHEVLLETQACASYELELVRAQDRIAHPRVRFEATPIEL.

Residues Ser-12 and Thr-47–Gln-48 contribute to the substrate site. Residues Asp-114, Glu-151, Lys-184, and Arg-211–Leu-214 each bind ATP. Asp-225 is a binding site for substrate.

Belongs to the pyridoxine kinase family. PdxY subfamily. Homodimer. Mg(2+) serves as cofactor.

It catalyses the reaction pyridoxal + ATP = pyridoxal 5'-phosphate + ADP + H(+). It participates in cofactor metabolism; pyridoxal 5'-phosphate salvage; pyridoxal 5'-phosphate from pyridoxal: step 1/1. Pyridoxal kinase involved in the salvage pathway of pyridoxal 5'-phosphate (PLP). Catalyzes the phosphorylation of pyridoxal to PLP. The polypeptide is Pyridoxal kinase PdxY (Pseudomonas fluorescens (strain SBW25)).